The chain runs to 173 residues: MASYKCPDCNYVYDESAGNVHEGFSPGTPWHLIPEDWCCPDCAVRDKLDFMLIESGVGEKGVTSTHTSPNLSEVSGTSLTAEAVVAPTSLEKLPSADVKGQDLYKTQPPRSDAQGGKAYLKWICITCGHIYDEALGDEAEGFTPGTRFEDIPDDWCCPDCGATKEDYVLYEEK.

Rubredoxin-like domains are found at residues 2–53 (ASYK…FMLI) and 119–170 (YLKW…YVLY). 8 residues coordinate Fe cation: C6, C9, C39, C42, C124, C127, C157, and C160.

Belongs to the rubredoxin family. The cofactor is Fe(3+).

Its subcellular location is the cytoplasm. The protein operates within hydrocarbon metabolism; alkane degradation. Its function is as follows. Involved in the hydrocarbon hydroxylating system, which transfers electrons from NADH to rubredoxin reductase and then through rubredoxin to alkane 1 monooxygenase. The chain is Rubredoxin-2 (alkG) from Ectopseudomonas oleovorans (Pseudomonas oleovorans).